A 128-amino-acid chain; its full sequence is Protein yippee-like At3g08990 (128 aa).

The Yippee domain maps to 12–109; it reads LVYSCKYCQT…LERFKVLGPY (98 aa). 4 residues coordinate Zn(2+): Cys16, Cys19, Cys72, and Cys75.

This sequence belongs to the yippee family.

This is Protein yippee-like At3g08990 from Arabidopsis thaliana (Mouse-ear cress).